The following is a 438-amino-acid chain: Thymidine phosphorylase (438 aa).

The protein belongs to the thymidine/pyrimidine-nucleoside phosphorylase family. Homodimer.

The enzyme catalyses thymidine + phosphate = 2-deoxy-alpha-D-ribose 1-phosphate + thymine. It participates in pyrimidine metabolism; dTMP biosynthesis via salvage pathway; dTMP from thymine: step 1/2. The enzymes which catalyze the reversible phosphorolysis of pyrimidine nucleosides are involved in the degradation of these compounds and in their utilization as carbon and energy sources, or in the rescue of pyrimidine bases for nucleotide synthesis. This chain is Thymidine phosphorylase, found in Burkholderia orbicola (strain MC0-3).